The following is a 372-amino-acid chain: tRNA 2-selenouridine synthase (372 aa).

The region spanning 17–140 (FLQDIPLIDV…LRNFLLTTLE (124 aa)) is the Rhodanese domain. Residue Cys100 is the S-selanylcysteine intermediate of the active site.

Belongs to the SelU family. As to quaternary structure, monomer.

It catalyses the reaction 5-methylaminomethyl-2-thiouridine(34) in tRNA + selenophosphate + (2E)-geranyl diphosphate + H2O + H(+) = 5-methylaminomethyl-2-selenouridine(34) in tRNA + (2E)-thiogeraniol + phosphate + diphosphate. The enzyme catalyses 5-methylaminomethyl-2-thiouridine(34) in tRNA + (2E)-geranyl diphosphate = 5-methylaminomethyl-S-(2E)-geranyl-thiouridine(34) in tRNA + diphosphate. The catalysed reaction is 5-methylaminomethyl-S-(2E)-geranyl-thiouridine(34) in tRNA + selenophosphate + H(+) = 5-methylaminomethyl-2-(Se-phospho)selenouridine(34) in tRNA + (2E)-thiogeraniol. It carries out the reaction 5-methylaminomethyl-2-(Se-phospho)selenouridine(34) in tRNA + H2O = 5-methylaminomethyl-2-selenouridine(34) in tRNA + phosphate. Functionally, involved in the post-transcriptional modification of the uridine at the wobble position (U34) of tRNA(Lys), tRNA(Glu) and tRNA(Gln). Catalyzes the conversion of 2-thiouridine (S2U-RNA) to 2-selenouridine (Se2U-RNA). Acts in a two-step process involving geranylation of 2-thiouridine (S2U) to S-geranyl-2-thiouridine (geS2U) and subsequent selenation of the latter derivative to 2-selenouridine (Se2U) in the tRNA chain. In Serratia proteamaculans (strain 568), this protein is tRNA 2-selenouridine synthase.